Consider the following 72-residue polypeptide: Large ribosomal subunit protein bL31 (72 aa).

4 residues coordinate Zn(2+): Cys-16, Cys-18, Cys-38, and Cys-41.

Belongs to the bacterial ribosomal protein bL31 family. Type A subfamily. As to quaternary structure, part of the 50S ribosomal subunit. It depends on Zn(2+) as a cofactor.

In terms of biological role, binds the 23S rRNA. This is Large ribosomal subunit protein bL31 from Aliivibrio fischeri (strain ATCC 700601 / ES114) (Vibrio fischeri).